The primary structure comprises 31 residues: U1-theraphotoxin-Cv1a (31 aa).

Cystine bridges form between Cys2-Cys16, Cys9-Cys21, and Cys15-Cys28.

As to expression, expressed by the venom gland.

It localises to the secreted. Its function is as follows. Insecticidal toxin that induces reversible paralysis in crickets but not in cockroaches and mice. Molecular target unknown. In Coremiocnemis valida (Singapore tarantula), this protein is U1-theraphotoxin-Cv1a.